Reading from the N-terminus, the 1042-residue chain is Disintegrin and metalloproteinase domain-containing protein unc-71 (1042 aa).

Residues 1–23 form the signal peptide; it reads MICASKITMLGLLVMCTLGGVLG. Topologically, residues 24 to 746 are extracellular; the sequence is KVDIRQTTAN…NIGTTLETAT (723 aa). N103 and N155 each carry an N-linked (GlcNAc...) asparagine glycan. In terms of domain architecture, Peptidase M12B spans 227-431; the sequence is KYVEVALIAD…GNIQCLLNKP (205 aa). Intrachain disulfides connect C338-C426, C378-C410, C380-C386, and C496-C516. The 88-residue stretch at 437-524 folds into the Disintegrin domain; it reads LRECGNGVVD…DCPPDGHLID (88 aa). The N-linked (GlcNAc...) asparagine glycan is linked to N538. The region spanning 662–699 is the EGF-like domain; that stretch reads SATACPTNNLALLCSGHGHCTTTARCVCFNGWSGVACD. 3 disulfides stabilise this stretch: C666–C681, C675–C687, and C689–C698. N703 carries an N-linked (GlcNAc...) asparagine glycan. Residues 747–767 form a helical membrane-spanning segment; sequence LFAILLGFGVFLLLCLVCLML. Topologically, residues 768-1042 are cytoplasmic; the sequence is CYRRRSVVEI…KLEMTNSMHN (275 aa). Disordered regions lie at residues 779–809, 825–850, and 980–1028; these read KPSD…RKRK, DERD…RRNG, and HDVG…PSLF. Residues 825–836 are compositionally biased toward basic and acidic residues; sequence DERDSTSLRSRD. Residues 1002–1027 are compositionally biased toward polar residues; that stretch reads DSPTLVNGASSSSTSNNYNFRQSPSL.

Its subcellular location is the cell membrane. In terms of biological role, involved in the migration of sex myoblasts (progenitors of egg-laying muscles), Q neuroblasts and BDU interneurons during development. Involved in axon branching and guidance of neurons including GABAergic type D motor neurons. Promotes sex myoblast migration and positioning independently of gonad attraction cues. May act downstream of mig-13 in order to promote the guidance, migration and positioning of Q neuroblasts and their descendants along the anteroposterior body axis. Required for coordinated movements. The polypeptide is Disintegrin and metalloproteinase domain-containing protein unc-71 (Caenorhabditis elegans).